The following is a 77-amino-acid chain: Structural DNA-binding protein p10 (77 aa).

The span at 1-12 shows a compositional bias: polar residues; sequence MPTKAGTKSTAN. A disordered region spans residues 1–38; the sequence is MPTKAGTKSTANKKTTKGPSKSGSAKGHTGKTHATALH. Over residues 17–27 the composition is skewed to low complexity; sequence KGPSKSGSAKG.

The protein belongs to the asfivirus P10 family.

The protein resides in the virion. Its function is as follows. May play a role in genome packaging through direct interaction with viral DNA. Binds to ssDNA and dsDNA with the same apparent affinity in vitro. This Ornithodoros (relapsing fever ticks) protein is Structural DNA-binding protein p10.